A 557-amino-acid chain; its full sequence is CTP synthase (557 aa).

An amidoligase domain region spans residues 1-270 (MTKYVFVTGG…DAIICEELKL (270 aa)). Residue serine 13 participates in CTP binding. Residue serine 13 coordinates UTP. ATP-binding positions include 14–19 (SLGKGI) and aspartate 71. Positions 71 and 144 each coordinate Mg(2+). CTP-binding positions include 151 to 153 (DIE), 191 to 196 (KTKPTQ), and lysine 227. UTP is bound by residues 191-196 (KTKPTQ) and lysine 227. A Glutamine amidotransferase type-1 domain is found at 295-547 (TIGMVGKYVD…VEAALAHHEA (253 aa)). Residue glycine 356 participates in L-glutamine binding. Cysteine 383 serves as the catalytic Nucleophile; for glutamine hydrolysis. L-glutamine contacts are provided by residues 384-387 (LGMQ), glutamate 407, and arginine 473. Catalysis depends on residues histidine 520 and glutamate 522.

Belongs to the CTP synthase family. Homotetramer.

The enzyme catalyses UTP + L-glutamine + ATP + H2O = CTP + L-glutamate + ADP + phosphate + 2 H(+). The catalysed reaction is L-glutamine + H2O = L-glutamate + NH4(+). It carries out the reaction UTP + NH4(+) + ATP = CTP + ADP + phosphate + 2 H(+). It participates in pyrimidine metabolism; CTP biosynthesis via de novo pathway; CTP from UDP: step 2/2. Allosterically activated by GTP, when glutamine is the substrate; GTP has no effect on the reaction when ammonia is the substrate. The allosteric effector GTP functions by stabilizing the protein conformation that binds the tetrahedral intermediate(s) formed during glutamine hydrolysis. Inhibited by the product CTP, via allosteric rather than competitive inhibition. Its function is as follows. Catalyzes the ATP-dependent amination of UTP to CTP with either L-glutamine or ammonia as the source of nitrogen. Regulates intracellular CTP levels through interactions with the four ribonucleotide triphosphates. The polypeptide is CTP synthase (Paraburkholderia phytofirmans (strain DSM 17436 / LMG 22146 / PsJN) (Burkholderia phytofirmans)).